The sequence spans 66 residues: Large ribosomal subunit protein uL29 (66 aa).

The protein belongs to the universal ribosomal protein uL29 family.

The polypeptide is Large ribosomal subunit protein uL29 (Bacillus mycoides (strain KBAB4) (Bacillus weihenstephanensis)).